A 374-amino-acid chain; its full sequence is Putative zinc metalloprotease R01501 (374 aa).

Histidine 26 contacts Zn(2+). The active site involves glutamate 27. Residue histidine 30 participates in Zn(2+) binding. 4 consecutive transmembrane segments (helical) span residues 36-55 (WSGI…LFGW), 112-134 (AATV…AVLF), 301-323 (VLNF…VPVL), and 348-367 (LAFR…AAWN). The PDZ domain maps to 126–199 (AIAIFAVLFS…LPITVRIERE (74 aa)).

This sequence belongs to the peptidase M50B family. Requires Zn(2+) as cofactor.

Its subcellular location is the cell inner membrane. The protein is Putative zinc metalloprotease R01501 of Rhizobium meliloti (strain 1021) (Ensifer meliloti).